Here is a 158-residue protein sequence, read N- to C-terminus: Ribosome maturation factor RimP (158 aa).

The protein belongs to the RimP family.

Its subcellular location is the cytoplasm. In terms of biological role, required for maturation of 30S ribosomal subunits. The sequence is that of Ribosome maturation factor RimP from Streptococcus uberis (strain ATCC BAA-854 / 0140J).